Consider the following 339-residue polypeptide: Phenylalanine--tRNA ligase alpha subunit (339 aa).

Residue Glu-253 coordinates Mg(2+).

It belongs to the class-II aminoacyl-tRNA synthetase family. Phe-tRNA synthetase alpha subunit type 1 subfamily. As to quaternary structure, tetramer of two alpha and two beta subunits. The cofactor is Mg(2+).

It is found in the cytoplasm. It catalyses the reaction tRNA(Phe) + L-phenylalanine + ATP = L-phenylalanyl-tRNA(Phe) + AMP + diphosphate + H(+). The polypeptide is Phenylalanine--tRNA ligase alpha subunit (Thioalkalivibrio sulfidiphilus (strain HL-EbGR7)).